A 2294-amino-acid chain; its full sequence is Reducing polyketide synthase BOA9 (2294 aa).

Positions 4 to 409 (PEPVAIIGMG…GANATAIVEA (406 aa)) constitute a Ketosynthase family 3 (KS3) domain. The segment at 537 to 853 (IFTGQGAQNA…DYAATLVRGQ (317 aa)) is malonyl-CoA:ACP transacylase (MAT) domain. Ser630 serves as the catalytic For malonyltransferase activity. The segment at 930 to 1067 (HDLLGAILPG…GTVTKKKAVT (138 aa)) is N-terminal hotdog fold. The segment at 930 to 1104 (HDLLGAILPG…LNYGPAFNGL (175 aa)) is dehydratase (DH) domain. One can recognise a PKS/mFAS DH domain in the interval 930–1236 (HDLLGAILPG…CTQYSEALDD (307 aa)). His962 serves as the catalytic Proton acceptor; for dehydratase activity. The interval 1078–1236 (QEPKAARTWY…CTQYSEALDD (159 aa)) is C-terminal hotdog fold. Asp1142 functions as the Proton donor; for dehydratase activity in the catalytic mechanism. An enoyl reductase (ER) domain region spans residues 1618–1908 (GIFDTIHFKD…KNSRIGRVVV (291 aa)). The segment at 1934-2107 (VHTYLLGVLE…LPATTISLTV (174 aa)) is ketoreductase (KR) domain. The 79-residue stretch at 2214–2292 (LLLPDILEMI…SLAKKIYDIR (79 aa)) folds into the Carrier domain. At Ser2251 the chain carries O-(pantetheine 4'-phosphoryl)serine.

It functions in the pathway polyketide biosynthesis. Functionally, reducing polyketide synthase; part of the gene cluster B that mediates the biosynthesis of botcinic acid and its botcinin derivatives, acetate-derived polyketides that contribute to virulence when combined with the sesquiterpene botrydial. Botcinic acid and its derivatives have been shown to induce chlorosis and necrosis during host plant infection, but also have antifungal activities. Two polyketide synthases, BOA6 and BOA9, are involved in the biosynthesis of botcinins. BOA6 mediates the formation of the per-methylated tetraketide core by condensation of four units of malonyl-CoA with one unit of acetyl-CoA, which would be methylated in activated methylene groups to yield a bicyclic acid intermediate that could then either be converted to botrylactone derivatives or lose the starter acetate unit through a retro-Claisen type C-C bond cleavage to yield botcinin derivatives. The second polyketide synthase, BOA9, is probably required for the biosynthesis of the tetraketide side chain of botcinins. The methyltransferase (MT) domain within BOA6 is probably responsible for the incorporation of four methyl groups. The trans-enoyl reductase BOA5 might take over the enoyl reductase function of BOA6 that misses an ER domain. The monooxygenases BOA2, BOA3 and BOA4 might be involved in further hydroxylations at C4, C5 and C8, whereas BOA7, close to BOA9, could potentially be involved in the hydroxylation at C4 in the side chain of botcinins. The chain is Reducing polyketide synthase BOA9 from Botryotinia fuckeliana (strain B05.10) (Noble rot fungus).